The sequence spans 467 residues: 3-isopropylmalate dehydratase large subunit (467 aa).

[4Fe-4S] cluster-binding residues include Cys347, Cys407, and Cys410.

It belongs to the aconitase/IPM isomerase family. LeuC type 1 subfamily. In terms of assembly, heterodimer of LeuC and LeuD. [4Fe-4S] cluster serves as cofactor.

The catalysed reaction is (2R,3S)-3-isopropylmalate = (2S)-2-isopropylmalate. Its pathway is amino-acid biosynthesis; L-leucine biosynthesis; L-leucine from 3-methyl-2-oxobutanoate: step 2/4. Catalyzes the isomerization between 2-isopropylmalate and 3-isopropylmalate, via the formation of 2-isopropylmaleate. This chain is 3-isopropylmalate dehydratase large subunit, found in Pelagibacter ubique (strain HTCC1062).